The primary structure comprises 335 residues: F420-dependent glucose-6-phosphate dehydrogenase (335 aa).

Asp-40 is a coenzyme F420-(gamma-Glu)n binding site. The active-site Proton donor is His-41. Residues Thr-77 and 108–109 each bind coenzyme F420-(gamma-Glu)n; that span reads TG. The active-site Proton acceptor is the Glu-110. Coenzyme F420-(gamma-Glu)n contacts are provided by residues Asn-113, 177-178, and 180-181; these read GG and VV. 4 residues coordinate substrate: Thr-195, Lys-198, Lys-259, and Arg-283.

Belongs to the F420-dependent glucose-6-phosphate dehydrogenase family. In terms of assembly, homodimer.

It catalyses the reaction oxidized coenzyme F420-(gamma-L-Glu)(n) + D-glucose 6-phosphate + H(+) = 6-phospho-D-glucono-1,5-lactone + reduced coenzyme F420-(gamma-L-Glu)(n). Functionally, catalyzes the coenzyme F420-dependent oxidation of glucose 6-phosphate (G6P) to 6-phosphogluconolactone. The polypeptide is F420-dependent glucose-6-phosphate dehydrogenase (Segniliparus rotundus (strain ATCC BAA-972 / CDC 1076 / CIP 108378 / DSM 44985 / JCM 13578)).